The primary structure comprises 219 residues: Nuclear transcription factor Y subunit B-8 (219 aa).

A disordered region spans residues 1–26 (MPDSDNDSGGPSNYAGGELSSPREQD). The DNA-binding element occupies 29–35 (LPIANVS). The interval 56–67 (VQECVSEFISFI) is subunit association domain (SAD). Positions 119–134 (AAASTTGAGTSAASTT) are enriched in low complexity. Disordered stretches follow at residues 119–142 (AAASTTGAGTSAASTTPPQQQHTA) and 166–219 (GQPM…NRGA). Gly residues predominate over residues 190 to 206 (GGRGGFGHHPGGGGGGS).

This sequence belongs to the NFYB/HAP3 subunit family. Heterotrimeric transcription factor composed of three components, NF-YA, NF-YB and NF-YC. NF-YB and NF-YC must interact and dimerize for NF-YA association and DNA binding. Interacts with NFYC2, NFYC4 and NFYC6.

It is found in the cytoplasm. Its function is as follows. Component of the NF-Y/HAP transcription factor complex. The sequence is that of Nuclear transcription factor Y subunit B-8 from Oryza sativa subsp. japonica (Rice).